The primary structure comprises 154 residues: Ribosome maturation factor RimP (154 aa).

It belongs to the RimP family.

It localises to the cytoplasm. Its function is as follows. Required for maturation of 30S ribosomal subunits. This chain is Ribosome maturation factor RimP, found in Haemophilus ducreyi (strain 35000HP / ATCC 700724).